Reading from the N-terminus, the 1012-residue chain is DNA polymerase catalytic subunit (1012 aa).

The tract at residues methionine 1–proline 31 is disordered. Residues glutamine 21 to proline 31 show a composition bias toward low complexity.

This sequence belongs to the DNA polymerase type-B family. In terms of assembly, forms a complex with the ssDNA-binding protein, the DNA polymerase processivity factor, and the alkaline exonuclease. Interacts with the putative helicase-primase complex subunit; this interaction may coordinate leading and lagging strand DNA synthesis at the replication fork.

Its subcellular location is the host nucleus. The enzyme catalyses DNA(n) + a 2'-deoxyribonucleoside 5'-triphosphate = DNA(n+1) + diphosphate. It catalyses the reaction Endonucleolytic cleavage to 5'-phosphomonoester.. Functionally, replicates viral genomic DNA. The replication complex is composed of six viral proteins: the DNA polymerase, processivity factor, primase, primase-associated factor, helicase, and ssDNA-binding protein. Additionally, the polymerase contains an intrinsic ribonuclease H (RNase H) activity that specifically degrades RNA/DNA heteroduplexes or duplex DNA substrates in the 5' to 3' direction. Therefore, it can catalyze the excision of the RNA primers that initiate the synthesis of Okazaki fragments at a replication fork during viral DNA replication. This Human herpesvirus 8 type P (isolate GK18) (HHV-8) protein is DNA polymerase catalytic subunit (ORF9).